Consider the following 513-residue polypeptide: GMP synthase [glutamine-hydrolyzing] (513 aa).

Positions 9-198 (LILVLDFGSQ…IREICKCTGE (190 aa)) constitute a Glutamine amidotransferase type-1 domain. The active-site Nucleophile is the cysteine 86. Residues histidine 172 and glutamate 174 contribute to the active site. Residues 199–388 (WTMENFIEIE…LGIPEHLVWR (190 aa)) form the GMPS ATP-PPase domain. 226–232 (SGGVDSS) is an ATP binding site.

As to quaternary structure, homodimer.

It carries out the reaction XMP + L-glutamine + ATP + H2O = GMP + L-glutamate + AMP + diphosphate + 2 H(+). It functions in the pathway purine metabolism; GMP biosynthesis; GMP from XMP (L-Gln route): step 1/1. Functionally, catalyzes the synthesis of GMP from XMP. The protein is GMP synthase [glutamine-hydrolyzing] of Macrococcus caseolyticus (strain JCSC5402) (Macrococcoides caseolyticum).